A 232-amino-acid chain; its full sequence is Ribonuclease 3 (232 aa).

The RNase III domain maps to 2-135 (IKALEDDLSQ…FIGALYLDQG (134 aa)). Glu48 contacts Mg(2+). Residue Asp52 is part of the active site. The Mg(2+) site is built by Asp121 and Glu124. The active site involves Glu124. The 70-residue stretch at 161-230 (DHKSELQELL…ANQALQLLRR (70 aa)) folds into the DRBM domain.

This sequence belongs to the ribonuclease III family. Homodimer. Mg(2+) is required as a cofactor.

The protein resides in the cytoplasm. The enzyme catalyses Endonucleolytic cleavage to 5'-phosphomonoester.. Functionally, digests double-stranded RNA. Involved in the processing of primary rRNA transcript to yield the immediate precursors to the large and small rRNAs (23S and 16S). Processes some mRNAs, and tRNAs when they are encoded in the rRNA operon. Processes pre-crRNA and tracrRNA of type II CRISPR loci if present in the organism. This chain is Ribonuclease 3, found in Pediococcus pentosaceus (strain ATCC 25745 / CCUG 21536 / LMG 10740 / 183-1w).